A 201-amino-acid chain; its full sequence is Ras-related protein Rab-9B (201 aa).

10 residues coordinate GTP: Val-18, Gly-19, Lys-20, Ser-21, Ser-22, Asp-33, Ser-34, Ala-36, His-38, and Thr-39. Position 21 (Ser-21) interacts with Mg(2+). Residues 31 to 42 (KFDSQAFHTIGV) carry the Switch 1 motif. Residue Ser-34 is modified to Phosphoserine. Mg(2+) is bound by residues Thr-39 and Asp-62. The Switch 2 motif lies at 64-78 (AGQERFKSLRTPFYR). Gly-65, Asn-124, Lys-125, Ala-155, and Lys-156 together coordinate GTP. Residues Cys-200 and Cys-201 are each lipidated (S-geranylgeranyl cysteine).

It belongs to the small GTPase superfamily. Rab family. As to quaternary structure, interacts (GTP-bound form) with SGSM1; the GDP-bound form has much lower affinity for SGSM1. The GTP-bound form but not the GDP-bound form interacts with HPS4 and the BLOC-3 complex (heterodimer of HPS1 and HPS4) but does not interact with HPS1 alone. Interacts (GTP-bound form) with NDE1. It depends on Mg(2+) as a cofactor. Ubiquitous.

It is found in the cell membrane. The protein localises to the cytoplasmic vesicle. It localises to the phagosome. The protein resides in the phagosome membrane. It carries out the reaction GTP + H2O = GDP + phosphate + H(+). With respect to regulation, regulated by guanine nucleotide exchange factors (GEFs) which promote the exchange of bound GDP for free GTP. Regulated by GTPase activating proteins (GAPs) which increase the GTP hydrolysis activity. Inhibited by GDP dissociation inhibitors (GDIs). Functionally, the small GTPases Rab are key regulators of intracellular membrane trafficking, from the formation of transport vesicles to their fusion with membranes. Rabs cycle between an inactive GDP-bound form and an active GTP-bound form that is able to recruit to membranes different sets of downstream effectors directly responsible for vesicle formation, movement, tethering and fusion. RAB9B is involved in the transport of proteins between the endosomes and the trans Golgi network. May use NDE1/NDEL1 as an effector to interact with the dynein motor complex in order to control retrograde trafficking of RAB9-associated late endosomes to the TGN. The sequence is that of Ras-related protein Rab-9B from Homo sapiens (Human).